Here is a 76-residue protein sequence, read N- to C-terminus: Omega-conotoxin-like TxO3 (76 aa).

Positions 1 to 22 are cleaved as a signal peptide; that stretch reads MKLTCVVIVAVLFLTAWTFVTA. Residues 23–52 constitute a propeptide that is removed on maturation; the sequence is VPHSSNALENLYLKAHHEMNNPEASELNKR. 3 disulfides stabilise this stretch: Cys53-Cys67, Cys60-Cys71, and Cys66-Cys75.

It belongs to the conotoxin O1 superfamily. In terms of tissue distribution, expressed by the venom duct.

It is found in the secreted. In terms of biological role, omega-conotoxins act at presynaptic membranes, they bind and block voltage-gated calcium channels (Cav). The polypeptide is Omega-conotoxin-like TxO3 (TXO3) (Conus textile (Cloth-of-gold cone)).